Reading from the N-terminus, the 404-residue chain is Probable eukaryotic initiation factor 4A (404 aa).

The disordered stretch occupies residues 1–28 (MAQQGKVEPQDQDSFLDDQPGIRPIPSF). The Q motif motif lies at 26-54 (PSFDDMPLHQNLLRGIYSHGFEKPSSIQQ). The region spanning 57–231 (IVPFTRGGDI…KKFMRDPTRI (175 aa)) is the Helicase ATP-binding domain. 70 to 77 (AQSGTGKT) contributes to the ATP binding site. A DEAD box motif is present at residues 179–182 (DEAD). Residues 242 to 402 (GIKQYFIAVE…ELPVDFAAYL (161 aa)) form the Helicase C-terminal domain.

It belongs to the DEAD box helicase family. eIF4A subfamily. In terms of assembly, eIF4F is a multi-subunit complex, the composition of which varies with external and internal environmental conditions. It is composed of at least EIF4A, EIF4E and EIF4G.

It catalyses the reaction ATP + H2O = ADP + phosphate + H(+). Functionally, ATP-dependent RNA helicase which is a subunit of the eIF4F complex involved in cap recognition and is required for mRNA binding to ribosome. In the current model of translation initiation, eIF4A unwinds RNA secondary structures in the 5'-UTR of mRNAs which is necessary to allow efficient binding of the small ribosomal subunit, and subsequent scanning for the initiator codon. The sequence is that of Probable eukaryotic initiation factor 4A from Trypanosoma cruzi (strain CL Brener).